Here is a 77-residue protein sequence, read N- to C-terminus: SS18-like protein 2 (77 aa).

The SH2-binding signature appears at 50-53; the sequence is YQHV.

This sequence belongs to the SS18 family.

In Homo sapiens (Human), this protein is SS18-like protein 2 (SS18L2).